The chain runs to 384 residues: Ceramide very long chain fatty acid hydroxylase SCS7 (384 aa).

Residues 1–197 (MSTNTSKTLE…NFLEPLTKTA (197 aa)) lie on the Cytoplasmic side of the membrane. The Cytochrome b5 heme-binding domain occupies 9–90 (LELFSKKTVQ…EDEYLIGYLA (82 aa)). Residues H45 and H72 each contribute to the heme site. A helical transmembrane segment spans residues 198 to 216 (WWVVPVAWLPVVVYHMGVA). Residues 217–221 (LKNMN) are Lumenal-facing. The chain crosses the membrane as a helical span at residues 222 to 246 (QLFACFLFCVGVFVWTLIEYGLHRF). Positions 244, 249, 268, 271, and 272 each coordinate Zn(2+). Residues 247 to 284 (LFHFDDWLPESNIAFATHFLLHGCHHYLPMDKYRLVMP) are Cytoplasmic-facing. The helical transmembrane segment at 285-302 (PTLFVILCAPFYKLVFAL) threads the bilayer. Residues 303-304 (LP) are Lumenal-facing. A helical membrane pass occupies residues 305–328 (LYWAYAGFAGGLFGYVCYDECHFF). Residues H326, H330, H345, H348, and H349 each coordinate Zn(2+). Residues 329–384 (LHHSKLPPFMRKLKKYHLEHHYKNYQLGFGVTSWFWDEVFGTYLGPDAPLSKMKYE) lie on the Cytoplasmic side of the membrane.

This sequence belongs to the sterol desaturase family. SCS7 subfamily. The cofactor is Zn(2+).

It is found in the endoplasmic reticulum membrane. It catalyses the reaction an N-(1,2 saturated acyl)-(4R)-hydroxysphinganine + 2 Fe(II)-[cytochrome b5] + O2 + 2 H(+) = an N-(2R-hydroxyacyl)-4R-hydroxysphinganine + 2 Fe(III)-[cytochrome b5] + H2O. The catalysed reaction is an N-(1,2-saturated acyl)sphinganine + 2 Fe(II)-[cytochrome b5] + O2 + 2 H(+) = an N-[(2'R)-hydroxyacyl]sphinganine + 2 Fe(III)-[cytochrome b5] + H2O. It carries out the reaction N-hexacosanoyl-(4R)-hydroxysphinganine + 2 Fe(II)-[cytochrome b5] + O2 + 2 H(+) = N-(2-hydroxyhexacosanyl)-(4R)-hydroxysphinganine + 2 Fe(III)-[cytochrome b5] + H2O. The protein operates within sphingolipid metabolism. In terms of biological role, ceramide hydroxylase involved in the hydroxylation of sphingolipid-associated very long chain fatty acids. Postulated to hydroxylate the very long chain fatty acid of dihydroceramides and phytoceramides at C-2. This Saccharomyces cerevisiae (strain ATCC 204508 / S288c) (Baker's yeast) protein is Ceramide very long chain fatty acid hydroxylase SCS7.